We begin with the raw amino-acid sequence, 120 residues long: Aspartate 1-decarboxylase (120 aa).

The active-site Schiff-base intermediate with substrate; via pyruvic acid is the S25. S25 is modified (pyruvic acid (Ser)). Residue T57 coordinates substrate. Y58 acts as the Proton donor in catalysis. 73 to 75 (GAA) contacts substrate.

It belongs to the PanD family. Heterooctamer of four alpha and four beta subunits. The cofactor is pyruvate. Is synthesized initially as an inactive proenzyme, which is activated by self-cleavage at a specific serine bond to produce a beta-subunit with a hydroxyl group at its C-terminus and an alpha-subunit with a pyruvoyl group at its N-terminus.

The protein localises to the cytoplasm. It carries out the reaction L-aspartate + H(+) = beta-alanine + CO2. It participates in cofactor biosynthesis; (R)-pantothenate biosynthesis; beta-alanine from L-aspartate: step 1/1. Catalyzes the pyruvoyl-dependent decarboxylation of aspartate to produce beta-alanine. The protein is Aspartate 1-decarboxylase of Ralstonia nicotianae (strain ATCC BAA-1114 / GMI1000) (Ralstonia solanacearum).